Consider the following 115-residue polypeptide: Ribonuclease P protein component (115 aa).

This sequence belongs to the RnpA family. As to quaternary structure, consists of a catalytic RNA component (M1 or rnpB) and a protein subunit.

The enzyme catalyses Endonucleolytic cleavage of RNA, removing 5'-extranucleotides from tRNA precursor.. RNaseP catalyzes the removal of the 5'-leader sequence from pre-tRNA to produce the mature 5'-terminus. It can also cleave other RNA substrates such as 4.5S RNA. The protein component plays an auxiliary but essential role in vivo by binding to the 5'-leader sequence and broadening the substrate specificity of the ribozyme. The polypeptide is Ribonuclease P protein component (Macrococcus caseolyticus (strain JCSC5402) (Macrococcoides caseolyticum)).